The following is a 473-amino-acid chain: Dol-P-Glc:Glc(2)Man(9)GlcNAc(2)-PP-Dol alpha-1,2-glucosyltransferase (473 aa).

The Cytoplasmic segment spans residues 1–6 (MAQLEG). A helical membrane pass occupies residues 7–27 (YYFSAALSCTFLVSCLLFSAF). Residues 28-64 (SRALREPYMDEIFHLPQAQRYCEGHFSLSQWDPMITT) lie on the Extracellular side of the membrane. Residues 65–85 (LPGLYLVSIGVIKPAIWIFGW) traverse the membrane as a helical segment. At 86-97 (SEHVVCSIGMLR) the chain is on the cytoplasmic side. The helical transmembrane segment at 98–118 (FVNLLFSVGNFYLLYLLFCKV) threads the bilayer. Topologically, residues 119-130 (QPRNKAASSIQR) are extracellular. The next 2 membrane-spanning stretches (helical) occupy residues 131-151 (VLST…FLYY) and 152-172 (TEAG…YGNH). Topologically, residues 173-175 (KTS) are extracellular. A helical membrane pass occupies residues 176-196 (AFLGFCGFMFRQTNIIWAVFC). Over 197–249 (AGNVIAQKLTEAWKTELQKKEDRLPPIKGPFAEFRKILQFLLAYSMSFKNLSM) the chain is Cytoplasmic. A helical transmembrane segment spans residues 250-270 (LLLLTWPYILLGFLFCAFVVV). Over 271-283 (NGGIVIGDRSSHE) the chain is Extracellular. A helical transmembrane segment spans residues 284-304 (ACLHFPQLFYFFSFTLFFSFP). Over 305-323 (HLLSPSKIKTFLSLVWKRR) the chain is Cytoplasmic. Residues 324-344 (ILFFVVTLVSVFLVWKFTYAH) traverse the membrane as a helical segment. Residues 345–367 (KYLLADNRHYTFYVWKRVFQRYE) lie on the Extracellular side of the membrane. A helical transmembrane segment spans residues 368-388 (TVKYLLVPAYIFAGWSIADSL). Residues 389–392 (KSKS) lie on the Cytoplasmic side of the membrane. The helical transmembrane segment at 393–413 (IFWNLMFFICLFTVIVPQKLL) threads the bilayer. Residues 414 to 436 (EFRYFILPYVIYRLNIPLPPTSR) lie on the Extracellular side of the membrane. Residues 437–457 (LICELSCYAVVNFITFFIFLN) traverse the membrane as a helical segment. The Cytoplasmic portion of the chain corresponds to 458–473 (KTFQWPNSQDIQRFMW).

The protein belongs to the ALG10 glucosyltransferase family.

It localises to the endoplasmic reticulum membrane. The catalysed reaction is an alpha-D-Glc-(1-&gt;3)-alpha-D-Glc-(1-&gt;3)-alpha-D-Man-(1-&gt;2)-alpha-D-Man-(1-&gt;2)-alpha-D-Man-(1-&gt;3)-[alpha-D-Man-(1-&gt;2)-alpha-D-Man-(1-&gt;3)-[alpha-D-Man-(1-&gt;2)-alpha-D-Man-(1-&gt;6)]-alpha-D-Man-(1-&gt;6)]-beta-D-Man-(1-&gt;4)-beta-D-GlcNAc-(1-&gt;4)-alpha-D-GlcNAc-diphospho-di-trans,poly-cis-dolichol + a di-trans,poly-cis-dolichyl beta-D-glucosyl phosphate = a alpha-D-Glc-(1-&gt;2)-alpha-D-Glc-(1-&gt;3)-alpha-D-Glc-(1-&gt;3)-alpha-D-Man-(1-&gt;2)-alpha-D-Man-(1-&gt;2)-alpha-D-Man-(1-&gt;3)-[alpha-D-Man-(1-&gt;2)-alpha-D-Man-(1-&gt;3)-[alpha-D-Man-(1-&gt;2)-alpha-D-Man-(1-&gt;6)]-alpha-D-Man-(1-&gt;6)]-beta-D-Man-(1-&gt;4)-beta-D-GlcNAc-(1-&gt;4)-alpha-D-GlcNAc-diphospho-di-trans,poly-cis-dolichol + a di-trans,poly-cis-dolichyl phosphate + H(+). The protein operates within protein modification; protein glycosylation. Its function is as follows. Dol-P-Glc:Glc(2)Man(9)GlcNAc(2)-PP-Dol alpha-1,2-glucosyltransferase that operates in the biosynthetic pathway of dolichol-linked oligosaccharides, the glycan precursors employed in protein asparagine (N)-glycosylation. The assembly of dolichol-linked oligosaccharides begins on the cytosolic side of the endoplasmic reticulum membrane and finishes in its lumen. The sequential addition of sugars to dolichol pyrophosphate produces dolichol-linked oligosaccharides containing fourteen sugars, including two GlcNAcs, nine mannoses and three glucoses. Once assembled, the oligosaccharide is transferred from the lipid to nascent proteins by oligosaccharyltransferases. In the lumen of the endoplasmic reticulum, adds the third and last glucose residue from dolichyl phosphate glucose (Dol-P-Glc) onto the lipid-linked oligosaccharide intermediate Glc(2)Man(9)GlcNAc(2)-PP-Dol to produce Glc(3)Man(9)GlcNAc(2)-PP-Dol. The protein is Dol-P-Glc:Glc(2)Man(9)GlcNAc(2)-PP-Dol alpha-1,2-glucosyltransferase of Homo sapiens (Human).